Here is a 178-residue protein sequence, read N- to C-terminus: ATP synthase subunit delta (178 aa).

It belongs to the ATPase delta chain family. As to quaternary structure, F-type ATPases have 2 components, F(1) - the catalytic core - and F(0) - the membrane proton channel. F(1) has five subunits: alpha(3), beta(3), gamma(1), delta(1), epsilon(1). F(0) has three main subunits: a(1), b(2) and c(10-14). The alpha and beta chains form an alternating ring which encloses part of the gamma chain. F(1) is attached to F(0) by a central stalk formed by the gamma and epsilon chains, while a peripheral stalk is formed by the delta and b chains.

The protein localises to the cell membrane. F(1)F(0) ATP synthase produces ATP from ADP in the presence of a proton or sodium gradient. F-type ATPases consist of two structural domains, F(1) containing the extramembraneous catalytic core and F(0) containing the membrane proton channel, linked together by a central stalk and a peripheral stalk. During catalysis, ATP synthesis in the catalytic domain of F(1) is coupled via a rotary mechanism of the central stalk subunits to proton translocation. In terms of biological role, this protein is part of the stalk that links CF(0) to CF(1). It either transmits conformational changes from CF(0) to CF(1) or is implicated in proton conduction. The chain is ATP synthase subunit delta from Streptococcus thermophilus (strain ATCC BAA-250 / LMG 18311).